We begin with the raw amino-acid sequence, 502 residues long: Cyanidin 3-O-glucoside 5-O-glucosyltransferase (acyl-glucose) (502 aa).

Residues Met1–Phe30 form the signal peptide. Asn2 is a glycosylation site (N-linked (GlcNAc...) asparagine). Residues Gln52, His150, and Asn196–Glu197 contribute to the a beta-D-glucoside site. The active-site Proton donor is the Glu197. An N-linked (GlcNAc...) asparagine glycan is attached at Asn303. A beta-D-glucoside-binding residues include Tyr320 and Glu388. Glu388 functions as the Nucleophile in the catalytic mechanism. A glycan (N-linked (GlcNAc...) asparagine) is linked at Asn425. Trp435 and Phe451 together coordinate a beta-D-glucoside.

The protein belongs to the glycosyl hydrolase 1 family. In terms of tissue distribution, expressed in petals.

The protein resides in the vacuole. It catalyses the reaction cyanidin 3-O-beta-D-glucoside + 1-O-(trans-sinapoyl)-beta-D-glucose = cyanidin 3,5-di-O-beta-D-glucoside + (E)-sinapate. Its pathway is pigment biosynthesis; anthocyanin biosynthesis. In terms of biological role, beta-glycosidase that catalyzes the transfer of glucose moiety to anthocyanidin 3-glucoside at the 5 position. Anthocyanins are ubiquitous colored pigments that are responsible for variations in petal color. Uses acyl-glucoses, but not UDP-glucose, as the glucose donor. This chain is Cyanidin 3-O-glucoside 5-O-glucosyltransferase (acyl-glucose) (AA5GT), found in Dianthus caryophyllus (Carnation).